We begin with the raw amino-acid sequence, 435 residues long: Serine--tRNA ligase (435 aa).

234–236 contacts L-serine; that stretch reads TAE. 265–267 contributes to the ATP binding site; the sequence is RRE. Glu288 contributes to the L-serine binding site. An ATP-binding site is contributed by 352 to 355; it reads EISS. Residue Ser388 participates in L-serine binding.

The protein belongs to the class-II aminoacyl-tRNA synthetase family. Type-1 seryl-tRNA synthetase subfamily. In terms of assembly, homodimer. The tRNA molecule binds across the dimer.

It is found in the cytoplasm. The enzyme catalyses tRNA(Ser) + L-serine + ATP = L-seryl-tRNA(Ser) + AMP + diphosphate + H(+). It carries out the reaction tRNA(Sec) + L-serine + ATP = L-seryl-tRNA(Sec) + AMP + diphosphate + H(+). The protein operates within aminoacyl-tRNA biosynthesis; selenocysteinyl-tRNA(Sec) biosynthesis; L-seryl-tRNA(Sec) from L-serine and tRNA(Sec): step 1/1. Its function is as follows. Catalyzes the attachment of serine to tRNA(Ser). Is also able to aminoacylate tRNA(Sec) with serine, to form the misacylated tRNA L-seryl-tRNA(Sec), which will be further converted into selenocysteinyl-tRNA(Sec). This Synechococcus sp. (strain JA-2-3B'a(2-13)) (Cyanobacteria bacterium Yellowstone B-Prime) protein is Serine--tRNA ligase.